A 586-amino-acid polypeptide reads, in one-letter code: Alpha-1,2-mannosyltransferase MNN5 (586 aa).

The N-terminal stretch at 1–29 (MLIRLKKRKILQVIVSAVVLILFFCSVHN) is a signal peptide. N-linked (GlcNAc...) asparagine glycans are attached at residues asparagine 113, asparagine 136, asparagine 259, and asparagine 264.

The protein belongs to the MNN1/MNT family. As to quaternary structure, interacts with SVP26. In terms of processing, glycosylated.

The protein localises to the golgi apparatus. The protein resides in the cis-Golgi network. The protein operates within protein modification; protein glycosylation. Responsible for addition of first and second mannose residues to the outer chain of core N-linked polysaccharides and to O-linked mannotriose. Implicated in late Golgi modifications. This chain is Alpha-1,2-mannosyltransferase MNN5 (MNN5), found in Saccharomyces cerevisiae (strain ATCC 204508 / S288c) (Baker's yeast).